A 208-amino-acid polypeptide reads, in one-letter code: Small ribosomal subunit protein uS4 (208 aa).

Residues 98–158 (GRLDNVVYRM…EKSKKQARIK (61 aa)) form the S4 RNA-binding domain.

The protein belongs to the universal ribosomal protein uS4 family. Part of the 30S ribosomal subunit. Contacts protein S5. The interaction surface between S4 and S5 is involved in control of translational fidelity.

Its function is as follows. One of the primary rRNA binding proteins, it binds directly to 16S rRNA where it nucleates assembly of the body of the 30S subunit. In terms of biological role, with S5 and S12 plays an important role in translational accuracy. This chain is Small ribosomal subunit protein uS4, found in Haemophilus ducreyi (strain 35000HP / ATCC 700724).